Reading from the N-terminus, the 375-residue chain is Xylose transport system permease protein XylH (375 aa).

10 consecutive transmembrane segments (helical) span residues 9-29 (LQVY…SVAT), 52-72 (LAIG…VGSL), 85-105 (VWWG…GLIF), 118-138 (VPSF…LIGL), 159-179 (LSDI…VLWG), 199-219 (DFTK…LLND), 220-240 (YRGI…GLFL), 271-291 (KLII…ILSA), 319-339 (LAGG…IASL), and 348-368 (VPTF…VWID).

The protein belongs to the binding-protein-dependent transport system permease family. AraH/RbsC subfamily.

The protein resides in the cell inner membrane. In terms of biological role, part of the binding-protein-dependent transport system for D-xylose. Probably responsible for the translocation of the substrate across the membrane. This is Xylose transport system permease protein XylH (xylH) from Haemophilus influenzae (strain ATCC 51907 / DSM 11121 / KW20 / Rd).